A 280-amino-acid chain; its full sequence is Bifunctional protein FolD (280 aa).

Residues 164–166 (GRS), Ser-189, and Val-230 contribute to the NADP(+) site.

The protein belongs to the tetrahydrofolate dehydrogenase/cyclohydrolase family. In terms of assembly, homodimer.

It carries out the reaction (6R)-5,10-methylene-5,6,7,8-tetrahydrofolate + NADP(+) = (6R)-5,10-methenyltetrahydrofolate + NADPH. The catalysed reaction is (6R)-5,10-methenyltetrahydrofolate + H2O = (6R)-10-formyltetrahydrofolate + H(+). The protein operates within one-carbon metabolism; tetrahydrofolate interconversion. Its function is as follows. Catalyzes the oxidation of 5,10-methylenetetrahydrofolate to 5,10-methenyltetrahydrofolate and then the hydrolysis of 5,10-methenyltetrahydrofolate to 10-formyltetrahydrofolate. This is Bifunctional protein FolD from Geotalea uraniireducens (strain Rf4) (Geobacter uraniireducens).